We begin with the raw amino-acid sequence, 297 residues long: tRNA uridine(34) hydroxylase (297 aa).

Residues 133–228 enclose the Rhodanese domain; the sequence is SGDEVVFFDG…YGETFKDQGL (96 aa). Cysteine 188 serves as the catalytic Cysteine persulfide intermediate.

It belongs to the TrhO family.

It catalyses the reaction uridine(34) in tRNA + AH2 + O2 = 5-hydroxyuridine(34) in tRNA + A + H2O. In terms of biological role, catalyzes oxygen-dependent 5-hydroxyuridine (ho5U) modification at position 34 in tRNAs. This Pseudarthrobacter chlorophenolicus (strain ATCC 700700 / DSM 12829 / CIP 107037 / JCM 12360 / KCTC 9906 / NCIMB 13794 / A6) (Arthrobacter chlorophenolicus) protein is tRNA uridine(34) hydroxylase.